A 243-amino-acid chain; its full sequence is 2-C-methyl-D-erythritol 4-phosphate cytidylyltransferase (243 aa).

This sequence belongs to the IspD/TarI cytidylyltransferase family. IspD subfamily.

It catalyses the reaction 2-C-methyl-D-erythritol 4-phosphate + CTP + H(+) = 4-CDP-2-C-methyl-D-erythritol + diphosphate. Its pathway is isoprenoid biosynthesis; isopentenyl diphosphate biosynthesis via DXP pathway; isopentenyl diphosphate from 1-deoxy-D-xylulose 5-phosphate: step 2/6. Its function is as follows. Catalyzes the formation of 4-diphosphocytidyl-2-C-methyl-D-erythritol from CTP and 2-C-methyl-D-erythritol 4-phosphate (MEP). The sequence is that of 2-C-methyl-D-erythritol 4-phosphate cytidylyltransferase from Rhodopirellula baltica (strain DSM 10527 / NCIMB 13988 / SH1).